Here is a 486-residue protein sequence, read N- to C-terminus: Galactose-3-O-sulfotransferase 4 (486 aa).

Over 1–18 the chain is Cytoplasmic; the sequence is MGPLSPARTLRLWGPRSL. A helical; Signal-anchor for type II membrane protein membrane pass occupies residues 19-39; that stretch reads GVALGVFMTIGFALQLLGGPF. Topologically, residues 40-486 are lumenal; sequence QRRLPGLQLR…PLKTSRPLSP (447 aa). N374 carries an N-linked (GlcNAc...) asparagine glycan.

Belongs to the galactose-3-O-sulfotransferase family. Requires Mn(2+) as cofactor. In terms of tissue distribution, expressed mainly in placenta, thymus, testis, ovary, spinal cord, trachea and adrenal gland and at low levels in brain, lung, spleen, prostate, small intestine, colon, stomach thyroid and lymph node.

The protein localises to the golgi apparatus. It localises to the golgi stack membrane. The protein operates within protein modification; carbohydrate sulfation. Its function is as follows. Catalyzes the transfer of sulfate to beta-1,3-linked galactose residues in O-linked glycoproteins. Good substrates include asialofetuin, Gal-beta-1,3-GalNAc and Gal-beta-1,3 (GlcNAc-beta-1,6)GalNAc. The sequence is that of Galactose-3-O-sulfotransferase 4 (GAL3ST4) from Homo sapiens (Human).